Consider the following 763-residue polypeptide: Nibrin (763 aa).

The 60-residue stretch at 22–81 (YVVGRKNCAILIPEDQSISRCHATLSVSHPSANLGQTNAASVLSIKDSSKYGTTVNGDKM) folds into the FHA domain. 2 BRCT domains span residues 102 to 179 (SKYR…CELL) and 215 to 324 (KRKS…NPRR). Disordered stretches follow at residues 389-496 (VKET…SSQT), 535-593 (SKAA…SEIE), and 738-763 (QTQQVREESLAEDLFRYNPKPSKRRR). Residues 423–433 (LFREDETDTRK) are compositionally biased toward basic and acidic residues. Residues 434-443 (NTPSLLPTKS) show a composition bias toward polar residues. A Nuclear localization signal motif is present at residues 469-474 (AKKRDR). A compositionally biased stretch (basic and acidic residues) spans 473 to 482 (DRAEDEKEAS). Over residues 742–752 (VREESLAEDLF) the composition is skewed to basic and acidic residues. A FxF/Y motif motif is present at residues 748 to 757 (AEDLFRYNPK).

Belongs to the Nibrin family. As to quaternary structure, component of the MRN complex composed of two heterodimers rad50 and mre11 associated with a single nbn.

It is found in the nucleus. The protein resides in the chromosome. The protein localises to the PML body. Its subcellular location is the telomere. In terms of biological role, component of the MRN complex, which plays a central role in double-strand break (DSB) repair, DNA recombination, maintenance of telomere integrity and meiosis. The MRN complex is involved in the repair of DNA double-strand breaks (DSBs) via homologous recombination (HR), an error-free mechanism which primarily occurs during S and G2 phases. The complex (1) mediates the end resection of damaged DNA, which generates proper single-stranded DNA, a key initial steps in HR, and is (2) required for the recruitment of other repair factors and efficient activation of ATM and ATR upon DNA damage. The MRN complex possesses single-strand endonuclease activity and double-strand-specific 3'-5' exonuclease activity, which are provided by MRE11, to initiate end resection, which is required for single-strand invasion and recombination. Within the MRN complex, nbn acts as a protein-protein adapter, which specifically recognizes and binds phosphorylated proteins, promoting their recruitment to DNA damage sites. Recruits mre11 and rad50 components of the MRN complex to DSBs in response to DNA damage. Promotes the recruitment of PI3/PI4-kinase family members atm, atr, and probably DNA-PKcs to the DNA damage sites, activating their functions. Mediates the recruitment of phosphorylated rbbp8/CtIP to DSBs, leading to cooperation between the MRN complex and rbbp8/CtIP to initiate end resection. The MRN complex promotes recruitment of topbp1 to DNA damage sites. The MRN complex and rbbp8/CtIP are also required for chromosome alignment during metaphase. This is Nibrin from Xenopus laevis (African clawed frog).